A 263-amino-acid chain; its full sequence is MIREMSNHDIKLEVCVDSIRSAFAAEEGGASRIELCSALGEGGLTPSIGTLKTIKETLTMPIYCMLRPRRGTDFVYSDEEMCALLTDMDLLRENGADGFVFGSLNPDRSINVDQCRHVLLASGGLPVTFHRAFDLTDQKSMDENVDMLRELGFRRLLSSGFRPTAADGVDCLAQLIAKHQRDFIVMPGAGIKVSNLEEILTVSRCLEFHASALDTAGEDYVAPTTTRMECDVTMGKQDVDPYYGTNSIVVRKMVTIAKAMSSR.

Belongs to the CutC family.

Involved in copper homeostasis. This chain is Copper homeostasis protein cutC homolog, found in Drosophila melanogaster (Fruit fly).